We begin with the raw amino-acid sequence, 458 residues long: Probable Xaa-Pro aminopeptidase pepP (458 aa).

Asp-254, Asp-265, Glu-388, and Glu-428 together coordinate Mn(2+).

Belongs to the peptidase M24B family. The cofactor is Mn(2+).

It carries out the reaction Release of any N-terminal amino acid, including proline, that is linked to proline, even from a dipeptide or tripeptide.. Catalyzes the removal of a penultimate prolyl residue from the N-termini of peptides. The protein is Probable Xaa-Pro aminopeptidase pepP (pepP) of Botryotinia fuckeliana (strain B05.10) (Noble rot fungus).